Reading from the N-terminus, the 199-residue chain is UPF0316 protein LA_0606 (199 aa).

The next 2 helical transmembrane spans lie at 47–67 (IAAS…TQVI) and 73–93 (VFCY…GMIL).

It belongs to the UPF0316 family.

Its subcellular location is the cell membrane. The sequence is that of UPF0316 protein LA_0606 from Leptospira interrogans serogroup Icterohaemorrhagiae serovar Lai (strain 56601).